A 364-amino-acid chain; its full sequence is Spermidine/putrescine import ATP-binding protein PotA (364 aa).

Positions 5 to 235 constitute an ABC transporter domain; it reads LSFKSVSKQY…PVNRFVADFI (231 aa). Position 37-44 (37-44) interacts with ATP; that stretch reads GPSGCGKT.

This sequence belongs to the ABC transporter superfamily. Spermidine/putrescine importer (TC 3.A.1.11.1) family. As to quaternary structure, the complex is composed of two ATP-binding proteins (PotA), two transmembrane proteins (PotB and PotC) and a solute-binding protein (PotD).

The protein localises to the cell membrane. The enzyme catalyses ATP + H2O + polyamine-[polyamine-binding protein]Side 1 = ADP + phosphate + polyamineSide 2 + [polyamine-binding protein]Side 1.. Functionally, part of the ABC transporter complex PotABCD involved in spermidine/putrescine import. Responsible for energy coupling to the transport system. The sequence is that of Spermidine/putrescine import ATP-binding protein PotA from Staphylococcus saprophyticus subsp. saprophyticus (strain ATCC 15305 / DSM 20229 / NCIMB 8711 / NCTC 7292 / S-41).